Here is a 608-residue protein sequence, read N- to C-terminus: Bifunctional lycopene cyclase/phytoene synthase (608 aa).

Positions 1–240 (MSILTYLEFH…LVFATCAIDR (240 aa)) are lycopene beta-cyclase. The next 7 membrane-spanning stretches (helical) occupy residues 3 to 23 (ILTY…ALCW), 37 to 56 (YKFL…NYIV), 80 to 97 (YMFF…SNFV), 117 to 137 (LLVR…AWHL), 150 to 170 (ILWY…EYIL), 175 to 195 (AVLL…IVAI), and 218 to 238 (VEEC…TCAI). The tract at residues 247-608 (LYKSSVQNQN…ARKIKSFFVD (362 aa)) is phytoene synthase.

The protein in the N-terminal section; belongs to the lycopene beta-cyclase family. This sequence in the C-terminal section; belongs to the phytoene/squalene synthase family.

It is found in the membrane. The enzyme catalyses all-trans-lycopene = gamma-carotene. The catalysed reaction is gamma-carotene = all-trans-beta-carotene. It carries out the reaction 2 (2E,6E,10E)-geranylgeranyl diphosphate = 15-cis-phytoene + 2 diphosphate. Its pathway is carotenoid biosynthesis; beta-carotene biosynthesis. It participates in carotenoid biosynthesis; phytoene biosynthesis; all-trans-phytoene from geranylgeranyl diphosphate: step 1/1. Functionally, bifunctional enzyme that catalyzes the reactions from geranylgeranyl diphosphate to phytoene (phytoene synthase) and lycopene to beta-carotene via the intermediate gamma-carotene (lycopene cyclase). This is Bifunctional lycopene cyclase/phytoene synthase from Blakeslea trispora (Choanephora trispora).